The sequence spans 475 residues: ATP synthase subunit beta (475 aa).

161-168 (GGAGVGKT) is an ATP binding site.

This sequence belongs to the ATPase alpha/beta chains family. F-type ATPases have 2 components, CF(1) - the catalytic core - and CF(0) - the membrane proton channel. CF(1) has five subunits: alpha(3), beta(3), gamma(1), delta(1), epsilon(1). CF(0) has three main subunits: a(1), b(2) and c(9-12). The alpha and beta chains form an alternating ring which encloses part of the gamma chain. CF(1) is attached to CF(0) by a central stalk formed by the gamma and epsilon chains, while a peripheral stalk is formed by the delta and b chains.

The protein localises to the cell membrane. It carries out the reaction ATP + H2O + 4 H(+)(in) = ADP + phosphate + 5 H(+)(out). Functionally, produces ATP from ADP in the presence of a proton gradient across the membrane. The catalytic sites are hosted primarily by the beta subunits. The sequence is that of ATP synthase subunit beta from Mycoplasma mycoides subsp. mycoides SC (strain CCUG 32753 / NCTC 10114 / PG1).